The primary structure comprises 33 residues: Helofensin-1 (33 aa).

The protein belongs to the beta-defensin family. Helofensin subfamily. In terms of tissue distribution, expressed by the venom gland.

It is found in the secreted. Its function is as follows. Lethal toxin which possesses an inhibitory effect on direct electrical stimulation of the isolated hemi-diaphragm. Neither hemorrhagic nor hemolytic activities are detected. Phospholipase A2 activity, proteolytic activity and arginine esterolytic activity are absent. This chain is Helofensin-1, found in Heloderma horridum horridum (Mexican beaded lizard).